Consider the following 599-residue polypeptide: Serine/threonine-protein kinase Nek1 (599 aa).

The 255-residue stretch at 4–258 (YEVLEQIGKG…AAELLKHPHL (255 aa)) folds into the Protein kinase domain. Residues 10–18 (IGKGAFGSA) and K33 each bind ATP. D129 serves as the catalytic Proton acceptor. Disordered regions lie at residues 364–386 (SIVKTPKRTPSKTITTPQLEPPK), 461–482 (SEDPPFLKLHGRRSPTPTPQHC), and 504–542 (DDDDGRSDSSSGRNNAAAAASSRAGSSESTRQRRFDTSS). Residues 511–530 (DSSSGRNNAAAAASSRAGSS) are compositionally biased toward low complexity.

It belongs to the protein kinase superfamily. NEK Ser/Thr protein kinase family. NIMA subfamily. Expressed in anthers, pistils and leaves.

It carries out the reaction L-seryl-[protein] + ATP = O-phospho-L-seryl-[protein] + ADP + H(+). The catalysed reaction is L-threonyl-[protein] + ATP = O-phospho-L-threonyl-[protein] + ADP + H(+). In terms of biological role, may be involved in plant development processes. In Oryza sativa subsp. japonica (Rice), this protein is Serine/threonine-protein kinase Nek1.